The following is a 255-amino-acid chain: Hydroxyacylglutathione hydrolase (255 aa).

His-56, His-58, Asp-60, His-61, His-114, Asp-133, and His-171 together coordinate Zn(2+).

It belongs to the metallo-beta-lactamase superfamily. Glyoxalase II family. In terms of assembly, monomer. Zn(2+) serves as cofactor.

The enzyme catalyses an S-(2-hydroxyacyl)glutathione + H2O = a 2-hydroxy carboxylate + glutathione + H(+). The protein operates within secondary metabolite metabolism; methylglyoxal degradation; (R)-lactate from methylglyoxal: step 2/2. In terms of biological role, thiolesterase that catalyzes the hydrolysis of S-D-lactoyl-glutathione to form glutathione and D-lactic acid. This is Hydroxyacylglutathione hydrolase from Mesorhizobium japonicum (strain LMG 29417 / CECT 9101 / MAFF 303099) (Mesorhizobium loti (strain MAFF 303099)).